We begin with the raw amino-acid sequence, 342 residues long: Methionyl-tRNA formyltransferase (342 aa).

S119–P122 provides a ligand contact to (6S)-5,6,7,8-tetrahydrofolate.

The protein belongs to the Fmt family.

It carries out the reaction L-methionyl-tRNA(fMet) + (6R)-10-formyltetrahydrofolate = N-formyl-L-methionyl-tRNA(fMet) + (6S)-5,6,7,8-tetrahydrofolate + H(+). Functionally, attaches a formyl group to the free amino group of methionyl-tRNA(fMet). The formyl group appears to play a dual role in the initiator identity of N-formylmethionyl-tRNA by promoting its recognition by IF2 and preventing the misappropriation of this tRNA by the elongation apparatus. The chain is Methionyl-tRNA formyltransferase from Nostoc sp. (strain PCC 7120 / SAG 25.82 / UTEX 2576).